Consider the following 560-residue polypeptide: uncharacterized protein (560 aa).

The N-terminal stretch at 1–29 is a signal peptide; it reads MKSALKKSVVSTSISLILASGMAAFAAHA. Residues Asp-66, Asp-67, and Ser-132 each contribute to the Ca(2+) site. Ser-132 (nucleophile) is an active-site residue. Position 132 is a 3-oxoalanine (Ser) (Ser-132). The active site involves His-185. Positions 345 and 346 each coordinate Ca(2+).

It belongs to the sulfatase family. Ca(2+) serves as cofactor. In terms of processing, the conversion to 3-oxoalanine (also known as C-formylglycine, FGly), of a serine or cysteine residue in prokaryotes and of a cysteine residue in eukaryotes, is critical for catalytic activity.

This is an uncharacterized protein from Escherichia coli (strain K12).